The sequence spans 309 residues: Olfactory receptor 7A10 (309 aa).

Topologically, residues 1-25 (MKSWNNTIILEFLLLGISEEPELQA) are extracellular. Asparagine 5 carries an N-linked (GlcNAc...) asparagine glycan. A helical transmembrane segment spans residues 26–46 (FLFGLFLSMYLVTVLGNLLII). The Cytoplasmic portion of the chain corresponds to 47–54 (LATISDSH). Residues 55–75 (LHTPMYFFLSNLSFVDICFVS) traverse the membrane as a helical segment. Over 76–99 (TTVPKMLVNIQTHNKVITYAGCIT) the chain is Extracellular. The cysteines at positions 97 and 189 are disulfide-linked. A helical transmembrane segment spans residues 100-120 (QMCFFLLFVGLDNFLLTVMAY). The Cytoplasmic segment spans residues 121–139 (DRFVAICHPLHYMVIMNPQ). The helical transmembrane segment at 140 to 160 (LCGLLVLASWIMSVLNSMLQS) threads the bilayer. Residues 161-197 (LMVLPLPFCTHMEIPHFFCEINQVVHLACSDTFLNDI) lie on the Extracellular side of the membrane. Residues 198–217 (VMYFAVALLGGGPLTGILYS) form a helical membrane-spanning segment. Topologically, residues 218 to 237 (YSKIVSSIRAISSAQGKYKA) are cytoplasmic. Residues 238–258 (FSTCASHLSVVSLFYGTCLGV) form a helical membrane-spanning segment. Over 259–271 (YLSSAATHNSHTG) the chain is Extracellular. Residues 272 to 292 (AAASVMYTVVTPMLNPFIYSL) traverse the membrane as a helical segment. Residues 293-309 (RNKHIKGAMKTFFRGKQ) are Cytoplasmic-facing.

Belongs to the G-protein coupled receptor 1 family.

The protein localises to the cell membrane. Its function is as follows. Odorant receptor. The sequence is that of Olfactory receptor 7A10 (OR7A10) from Homo sapiens (Human).